A 293-amino-acid chain; its full sequence is Elongation factor Ts (293 aa).

The involved in Mg(2+) ion dislocation from EF-Tu stretch occupies residues 80-83 (TDFV).

Belongs to the EF-Ts family.

The protein resides in the cytoplasm. Its function is as follows. Associates with the EF-Tu.GDP complex and induces the exchange of GDP to GTP. It remains bound to the aminoacyl-tRNA.EF-Tu.GTP complex up to the GTP hydrolysis stage on the ribosome. The sequence is that of Elongation factor Ts from Paraburkholderia xenovorans (strain LB400).